Reading from the N-terminus, the 508-residue chain is Cytochrome P450 4A12B (508 aa).

An N-terminal signal peptide occupies residues 1 to 37 (MSASALSSIRFPGSISEYLQVASVLSLLLLLFKTAQL). Heme is bound by residues E319 and C455.

This sequence belongs to the cytochrome P450 family. Heme is required as a cofactor. As to expression, expressed in lung, but almost undetectable in the kidneys of five different strains.

The protein localises to the endoplasmic reticulum membrane. The protein resides in the microsome membrane. The enzyme catalyses an organic molecule + reduced [NADPH--hemoprotein reductase] + O2 = an alcohol + oxidized [NADPH--hemoprotein reductase] + H2O + H(+). It catalyses the reaction dodecanoate + reduced [NADPH--hemoprotein reductase] + O2 = 11-hydroxydodecanoate + oxidized [NADPH--hemoprotein reductase] + H2O + H(+). It carries out the reaction dodecanoate + reduced [NADPH--hemoprotein reductase] + O2 = 12-hydroxydodecanoate + oxidized [NADPH--hemoprotein reductase] + H2O + H(+). The catalysed reaction is (5Z,8Z,11Z,14Z)-eicosatetraenoate + reduced [NADPH--hemoprotein reductase] + O2 = 18-hydroxy-(5Z,8Z,11Z,14Z)-eicosatetraenoate + oxidized [NADPH--hemoprotein reductase] + H2O + H(+). The enzyme catalyses (5Z,8Z,11Z,14Z)-eicosatetraenoate + reduced [NADPH--hemoprotein reductase] + O2 = 19-hydroxy-(5Z,8Z,11Z,14Z)-eicosatetraenoate + oxidized [NADPH--hemoprotein reductase] + H2O + H(+). It catalyses the reaction (5Z,8Z,11Z,14Z)-eicosatetraenoate + reduced [NADPH--hemoprotein reductase] + O2 = 20-hydroxy-(5Z,8Z,11Z,14Z)-eicosatetraenoate + oxidized [NADPH--hemoprotein reductase] + H2O + H(+). It carries out the reaction (5Z,8Z,11Z,14Z,17Z)-eicosapentaenoate + reduced [NADPH--hemoprotein reductase] + O2 = 19-hydroxy-(5Z,8Z,11Z,14Z,17Z)-eicosapentaenoate + oxidized [NADPH--hemoprotein reductase] + H2O + H(+). The catalysed reaction is (5Z,8Z,11Z,14Z,17Z)-eicosapentaenoate + reduced [NADPH--hemoprotein reductase] + O2 = 20-hydroxy-(5Z,8Z,11Z,14Z,17Z)-eicosapentaenoate + oxidized [NADPH--hemoprotein reductase] + H2O + H(+). The enzyme catalyses (5Z,8Z,11Z,14Z,17Z)-eicosapentaenoate + reduced [NADPH--hemoprotein reductase] + O2 = (17S,18R)-epoxy-(5Z,8Z,11Z,14Z)-eicosatetraenoate + oxidized [NADPH--hemoprotein reductase] + H2O + H(+). It catalyses the reaction (5Z,8Z,11Z,14Z,17Z)-eicosapentaenoate + reduced [NADPH--hemoprotein reductase] + O2 = (17R,18S)-epoxy-(5Z,8Z,11Z,14Z)-eicosatetraenoate + oxidized [NADPH--hemoprotein reductase] + H2O + H(+). Its pathway is lipid metabolism; fatty acid metabolism. With respect to regulation, activated by cytochrome b5. The Vmax almost doubles in the presence of cytochrome b5. In terms of biological role, a cytochrome P450 monooxygenase involved in the metabolism of fatty acids and their oxygenated derivatives (oxylipins). Mechanistically, uses molecular oxygen inserting one oxygen atom into a substrate, and reducing the second into a water molecule, with two electrons provided by NADPH via cytochrome P450 reductase (CPR; NADPH-ferrihemoprotein reductase). Catalyzes predominantly the oxidation of the terminal carbon (omega-oxidation) of saturated and unsaturated fatty acids. May act as a major omega-hydroxylase for dodecanoic (lauric) acid in kidney. Participates in omega-hydroxylation of (5Z,8Z,11Z,14Z)-eicosatetraenoic acid (arachidonate) to 20-hydroxyeicosatetraenoic acid (20-HETE), a signaling molecule acting both as vasoconstrictive and natriuretic with overall effect on arterial blood pressure. Acts as an omega-hydroxylase and epoxidase toward (5Z,8Z,11Z,14Z,17Z)-eicosapentaenoc acid (EPA). Catalyzes the epoxidation of the last double bond of EPA with no preferred stereoselectivity, producing both (R,S) and (S,R) stereoisomers. Can also catalyze the omega-1 and omega-2 oxidation of fatty acids with lower efficiency. The sequence is that of Cytochrome P450 4A12B from Mus musculus (Mouse).